We begin with the raw amino-acid sequence, 484 residues long: tRNA sulfurtransferase (484 aa).

Residues 63-167 (REMIERLTCT…LDRLFVIHRQ (105 aa)) enclose the THUMP domain. Residues 185-186 (LM), Lys267, Gly289, and Gln298 contribute to the ATP site. An intrachain disulfide couples Cys346 to Cys457. The Rhodanese domain maps to 405 to 483 (VLPGQIVIDI…GHTNVRVYRP (79 aa)). Cys457 (cysteine persulfide intermediate) is an active-site residue.

Belongs to the ThiI family.

The protein resides in the cytoplasm. It catalyses the reaction [ThiI sulfur-carrier protein]-S-sulfanyl-L-cysteine + a uridine in tRNA + 2 reduced [2Fe-2S]-[ferredoxin] + ATP + H(+) = [ThiI sulfur-carrier protein]-L-cysteine + a 4-thiouridine in tRNA + 2 oxidized [2Fe-2S]-[ferredoxin] + AMP + diphosphate. The enzyme catalyses [ThiS sulfur-carrier protein]-C-terminal Gly-Gly-AMP + S-sulfanyl-L-cysteinyl-[cysteine desulfurase] + AH2 = [ThiS sulfur-carrier protein]-C-terminal-Gly-aminoethanethioate + L-cysteinyl-[cysteine desulfurase] + A + AMP + 2 H(+). The protein operates within cofactor biosynthesis; thiamine diphosphate biosynthesis. Catalyzes the ATP-dependent transfer of a sulfur to tRNA to produce 4-thiouridine in position 8 of tRNAs, which functions as a near-UV photosensor. Also catalyzes the transfer of sulfur to the sulfur carrier protein ThiS, forming ThiS-thiocarboxylate. This is a step in the synthesis of thiazole, in the thiamine biosynthesis pathway. The sulfur is donated as persulfide by IscS. In Pseudomonas aeruginosa (strain UCBPP-PA14), this protein is tRNA sulfurtransferase.